The chain runs to 140 residues: 3-hydroxyacyl-[acyl-carrier-protein] dehydratase FabZ (140 aa).

Residue His-48 is part of the active site.

Belongs to the thioester dehydratase family. FabZ subfamily.

The protein resides in the cytoplasm. The enzyme catalyses a (3R)-hydroxyacyl-[ACP] = a (2E)-enoyl-[ACP] + H2O. Involved in unsaturated fatty acids biosynthesis. Catalyzes the dehydration of short chain beta-hydroxyacyl-ACPs and long chain saturated and unsaturated beta-hydroxyacyl-ACPs. The sequence is that of 3-hydroxyacyl-[acyl-carrier-protein] dehydratase FabZ from Ligilactobacillus salivarius (strain UCC118) (Lactobacillus salivarius).